Reading from the N-terminus, the 435-residue chain is Serine--tRNA ligase (435 aa).

An L-serine-binding site is contributed by 242-244; the sequence is TAE. 273–275 is a binding site for ATP; it reads RSE. An L-serine-binding site is contributed by Glu296. 360-363 is an ATP binding site; that stretch reads EISS. An L-serine-binding site is contributed by Ser396.

This sequence belongs to the class-II aminoacyl-tRNA synthetase family. Type-1 seryl-tRNA synthetase subfamily. As to quaternary structure, homodimer. The tRNA molecule binds across the dimer.

Its subcellular location is the cytoplasm. It catalyses the reaction tRNA(Ser) + L-serine + ATP = L-seryl-tRNA(Ser) + AMP + diphosphate + H(+). The enzyme catalyses tRNA(Sec) + L-serine + ATP = L-seryl-tRNA(Sec) + AMP + diphosphate + H(+). It functions in the pathway aminoacyl-tRNA biosynthesis; selenocysteinyl-tRNA(Sec) biosynthesis; L-seryl-tRNA(Sec) from L-serine and tRNA(Sec): step 1/1. In terms of biological role, catalyzes the attachment of serine to tRNA(Ser). Is also able to aminoacylate tRNA(Sec) with serine, to form the misacylated tRNA L-seryl-tRNA(Sec), which will be further converted into selenocysteinyl-tRNA(Sec). This chain is Serine--tRNA ligase, found in Vibrio campbellii (strain ATCC BAA-1116).